Here is a 342-residue protein sequence, read N- to C-terminus: Cytosolic Fe-S cluster assembly factor NBP35 (342 aa).

The segment at S16–D42 is disordered. Positions 30, 44, 47, and 53 each coordinate [4Fe-4S] cluster. G83 to S90 contacts ATP. [4Fe-4S] cluster contacts are provided by C256 and C259.

The protein belongs to the Mrp/NBP35 ATP-binding proteins family. NUBP1/NBP35 subfamily. Heterotetramer of 2 NBP35 and 2 CFD1 chains. Requires [4Fe-4S] cluster as cofactor.

Its subcellular location is the cytoplasm. Component of the cytosolic iron-sulfur (Fe/S) protein assembly (CIA) machinery. Required for maturation of extramitochondrial Fe-S proteins. The NBP35-CFD1 heterotetramer forms a Fe-S scaffold complex, mediating the de novo assembly of an Fe-S cluster and its transfer to target apoproteins. This Coccidioides immitis (strain RS) (Valley fever fungus) protein is Cytosolic Fe-S cluster assembly factor NBP35.